The following is a 155-amino-acid chain: Small ribosomal subunit protein uS7 (155 aa).

This sequence belongs to the universal ribosomal protein uS7 family. Part of the 30S ribosomal subunit. Contacts proteins S9 and S11.

Functionally, one of the primary rRNA binding proteins, it binds directly to 16S rRNA where it nucleates assembly of the head domain of the 30S subunit. Is located at the subunit interface close to the decoding center, probably blocks exit of the E-site tRNA. In Helicobacter acinonychis (strain Sheeba), this protein is Small ribosomal subunit protein uS7.